The sequence spans 140 residues: Arsenate-mycothiol transferase ArsC1 (140 aa).

This sequence belongs to the low molecular weight phosphotyrosine protein phosphatase family.

It is found in the cytoplasm. It carries out the reaction mycothiol + arsenate = arseno-mycothiol + H2O. Involved in defense against toxic arsenate. Involved in the mycothiol/myoredoxin redox pathway which uses a mycothioltransferase mechanism; facilitates adduct formation between arsenate and mycothiol. This Corynebacterium glutamicum (strain ATCC 13032 / K051) protein is Arsenate-mycothiol transferase ArsC1 (arsC1).